Reading from the N-terminus, the 501-residue chain is MRSSLAPGVWFFRAFSRDSWFRGLILLLTFLIYACYHMSRKPISIVKSRLHQNCSEQIKPINDTHSLNDTMWCSWAPFDKDNYKELLGGVDNAFLIAYAIGMFISGVFGERLPLRYYLSAGMLLSGLFTSLFGLGYFWNIHELWYFVVIQVCNGLVQTTGWPSVVTCVGNWFGKGKRGFIMGIWNSHTSVGNILGSLIAGIWVNGQWGLSFIVPGIITAVMGVITFLFLIEHPEDVDCAPPQHHGEPAENQDNPEDPGNSPCSIRESGLETVAKCSKGPCEEPAAISFFGALRIPGVVEFSLCLLFAKLVSYTFLYWLPLYIANVAHFSAKEAGDLSTLFDVGGIIGGIVAGLVSDYTNGRATTCCVMLILAAPMMFLYNYIGQDGIASSIVMLIICGGLVNGPYALITTAVSADLGTHKSLKGNAKALSTVTAIIDGTGSIGAALGPLLAGLISPTGWNNVFYMLISADVLACLLLCRLVYKEILAWKVSLSRGSGYKEI.

A helical transmembrane segment spans residues 19–39; the sequence is SWFRGLILLLTFLIYACYHMS. N-linked (GlcNAc...) asparagine glycosylation is found at asparagine 53, asparagine 62, and asparagine 68. A run of 5 helical transmembrane segments spans residues 88–108, 118–138, 145–165, 189–209, and 210–230; these read GGVDNAFLIAYAIGMFISGVF, LSAGMLLSGLFTSLFGLGYFW, YFVVIQVCNGLVQTTGWPSVV, SVGNILGSLIAGIWVNGQWGL, and SFIVPGIITAVMGVITFLFLI. A disordered region spans residues 240–262; that stretch reads PPQHHGEPAENQDNPEDPGNSPC. 6 consecutive transmembrane segments (helical) span residues 302–322, 334–354, 362–382, 391–411, 434–454, and 462–482; these read LCLLFAKLVSYTFLYWLPLYI, GDLSTLFDVGGIIGGIVAGLV, ATTCCVMLILAAPMMFLYNYI, IVMLIICGGLVNGPYALITTA, AIIDGTGSIGAALGPLLAGLI, and VFYMLISADVLACLLLCRLVY.

The protein belongs to the major facilitator superfamily. Organophosphate:Pi antiporter (OPA) (TC 2.A.1.4) family. In terms of tissue distribution, detected in intestine and pancreas. Lower expression is also detected in liver and kidney.

The protein resides in the endoplasmic reticulum membrane. The enzyme catalyses D-glucose 6-phosphate(in) + phosphate(out) = D-glucose 6-phosphate(out) + phosphate(in). Inhibited by vanadate but not by chlorogenic acid. Its function is as follows. Inorganic phosphate and glucose-6-phosphate antiporter. May transport cytoplasmic glucose-6-phosphate into the lumen of the endoplasmic reticulum and translocate inorganic phosphate into the opposite direction. Independent of a lumenal glucose-6-phosphatase. May not play a role in homeostatic regulation of blood glucose levels. The chain is Glucose-6-phosphate exchanger SLC37A2 from Homo sapiens (Human).